The chain runs to 68 residues: MGMRMMFTMFLLVVLATTVVSINLDHAFDGRNAAANNKATDLMARTVRRFCSDPPCRISNPESCGWEP.

Residues 1 to 21 (MGMRMMFTMFLLVVLATTVVS) form the signal peptide. Positions 22 to 49 (INLDHAFDGRNAAANNKATDLMARTVRR) are excised as a propeptide. Cys51 and Cys64 are oxidised to a cystine.

Belongs to the conotoxin A superfamily. In terms of tissue distribution, expressed by the venom duct.

It is found in the secreted. Alpha-conotoxins act on postsynaptic membranes, they bind to the nicotinic acetylcholine receptors (nAChR) and thus inhibit them. The chain is Putative alpha-conotoxin Qc alphaL-1 from Conus quercinus (Oak cone).